Reading from the N-terminus, the 135-residue chain is Single-stranded DNA-binding protein RIM1, mitochondrial (135 aa).

The transit peptide at 1–17 (MFLRTQARFFHATTKKM) directs the protein to the mitochondrion. Positions 19–117 (FSKMSIVGRI…LVQKDINLLK (99 aa)) constitute an SSB domain.

Homotetramer. Interacts with PIF1.

It localises to the mitochondrion. In terms of biological role, this protein binds preferentially and cooperatively to single-stranded DNA (ssDNS). Involved in mitochondrial DNA replication. Stimulates PIF1 helicase activity. This is Single-stranded DNA-binding protein RIM1, mitochondrial (RIM1) from Saccharomyces cerevisiae (strain ATCC 204508 / S288c) (Baker's yeast).